Reading from the N-terminus, the 96-residue chain is Aspartyl/glutamyl-tRNA(Asn/Gln) amidotransferase subunit C (96 aa).

This sequence belongs to the GatC family. As to quaternary structure, heterotrimer of A, B and C subunits.

It catalyses the reaction L-glutamyl-tRNA(Gln) + L-glutamine + ATP + H2O = L-glutaminyl-tRNA(Gln) + L-glutamate + ADP + phosphate + H(+). The catalysed reaction is L-aspartyl-tRNA(Asn) + L-glutamine + ATP + H2O = L-asparaginyl-tRNA(Asn) + L-glutamate + ADP + phosphate + 2 H(+). Functionally, allows the formation of correctly charged Asn-tRNA(Asn) or Gln-tRNA(Gln) through the transamidation of misacylated Asp-tRNA(Asn) or Glu-tRNA(Gln) in organisms which lack either or both of asparaginyl-tRNA or glutaminyl-tRNA synthetases. The reaction takes place in the presence of glutamine and ATP through an activated phospho-Asp-tRNA(Asn) or phospho-Glu-tRNA(Gln). This chain is Aspartyl/glutamyl-tRNA(Asn/Gln) amidotransferase subunit C, found in Symbiobacterium thermophilum (strain DSM 24528 / JCM 14929 / IAM 14863 / T).